Here is a 96-residue protein sequence, read N- to C-terminus: Putative toxin Y4kP (96 aa).

It belongs to the RelE toxin family.

In terms of biological role, toxic component of a type II toxin-antitoxin (TA) system. The protein is Putative toxin Y4kP of Sinorhizobium fredii (strain NBRC 101917 / NGR234).